A 140-amino-acid polypeptide reads, in one-letter code: 3-hydroxyacyl-[acyl-carrier-protein] dehydratase FabZ (140 aa).

The active site involves His-48.

Belongs to the thioester dehydratase family. FabZ subfamily.

It is found in the cytoplasm. The catalysed reaction is a (3R)-hydroxyacyl-[ACP] = a (2E)-enoyl-[ACP] + H2O. In terms of biological role, involved in unsaturated fatty acids biosynthesis. Catalyzes the dehydration of short chain beta-hydroxyacyl-ACPs and long chain saturated and unsaturated beta-hydroxyacyl-ACPs. The sequence is that of 3-hydroxyacyl-[acyl-carrier-protein] dehydratase FabZ from Caldicellulosiruptor saccharolyticus (strain ATCC 43494 / DSM 8903 / Tp8T 6331).